We begin with the raw amino-acid sequence, 364 residues long: Peptide chain release factor 1 (364 aa).

Position 230 is an N5-methylglutamine (Gln230).

This sequence belongs to the prokaryotic/mitochondrial release factor family. Methylated by PrmC. Methylation increases the termination efficiency of RF1.

Its subcellular location is the cytoplasm. Peptide chain release factor 1 directs the termination of translation in response to the peptide chain termination codons UAG and UAA. The polypeptide is Peptide chain release factor 1 (Acidothermus cellulolyticus (strain ATCC 43068 / DSM 8971 / 11B)).